A 250-amino-acid chain; its full sequence is Probable cytokinin riboside 5'-monophosphate phosphoribohydrolase LOGL6 (250 aa).

Substrate contacts are provided by residues Glu98, 116 to 117 (RK), and 133 to 139 (GYGTLEE).

The protein belongs to the LOG family. As to expression, expressed in roots, leaves, stems, tiller buds, shoot apex, immature inflorescences and flowers.

The enzyme catalyses N(6)-(dimethylallyl)adenosine 5'-phosphate + H2O = N(6)-dimethylallyladenine + D-ribose 5-phosphate. It carries out the reaction 9-ribosyl-trans-zeatin 5'-phosphate + H2O = trans-zeatin + D-ribose 5-phosphate. In terms of biological role, cytokinin-activating enzyme working in the direct activation pathway. Phosphoribohydrolase that converts inactive cytokinin nucleotides to the biologically active free-base forms. This is Probable cytokinin riboside 5'-monophosphate phosphoribohydrolase LOGL6 (LOGL6) from Oryza sativa subsp. japonica (Rice).